Here is a 165-residue protein sequence, read N- to C-terminus: UPF0303 protein BceJ2315_15790 (165 aa).

Belongs to the UPF0303 family.

In Burkholderia cenocepacia (strain ATCC BAA-245 / DSM 16553 / LMG 16656 / NCTC 13227 / J2315 / CF5610) (Burkholderia cepacia (strain J2315)), this protein is UPF0303 protein BceJ2315_15790.